The chain runs to 211 residues: Nucleoside triphosphate pyrophosphatase (211 aa).

The active-site Proton acceptor is the Asp76.

Belongs to the Maf family. It depends on a divalent metal cation as a cofactor.

Its subcellular location is the cytoplasm. It carries out the reaction a ribonucleoside 5'-triphosphate + H2O = a ribonucleoside 5'-phosphate + diphosphate + H(+). It catalyses the reaction a 2'-deoxyribonucleoside 5'-triphosphate + H2O = a 2'-deoxyribonucleoside 5'-phosphate + diphosphate + H(+). Nucleoside triphosphate pyrophosphatase. May have a dual role in cell division arrest and in preventing the incorporation of modified nucleotides into cellular nucleic acids. This chain is Nucleoside triphosphate pyrophosphatase, found in Saccharopolyspora erythraea (strain ATCC 11635 / DSM 40517 / JCM 4748 / NBRC 13426 / NCIMB 8594 / NRRL 2338).